Here is a 1152-residue protein sequence, read N- to C-terminus: P3N-PIPO polyprotein (1152 aa).

The region spanning valine 292–tyrosine 437 is the Peptidase S30 domain. Residues histidine 345, aspartate 354, and serine 388 each act as for P1 proteinase activity in the active site. The Involved in interaction with stylet and aphid transmission signature appears at lysine 489–cysteine 492. An Involved in virions binding and aphid transmission motif is present at residues proline 747–lysine 749. The Peptidase C6 domain occupies methionine 773–glycine 895. Catalysis depends on for helper component proteinase activity residues cysteine 781 and histidine 854.

The protein belongs to the potyviridae P3N-PIPO polyprotein family. In terms of assembly, interacts (via PIPO domain) with host PCaP1 protein; this interaction may help to anchor the movement complex to the plasma membrane from which the complex could move to the plasmodesmata. Post-translationally, potyviral RNA is expressed as two polyproteins which undergo post-translational proteolytic processing. Genome polyprotein is processed by NIa-pro, P1 and HC-pro proteinases resulting in the production of at least ten individual proteins. P3N-PIPO is cleaved by P1 and HC-pro proteinases resulting in the production of three individual proteins. The P1 proteinase and the HC-pro cleave only their respective C-termini autocatalytically.

The protein localises to the host cell junction. Its subcellular location is the host plasmodesma. It catalyses the reaction Hydrolyzes a Gly-|-Gly bond at its own C-terminus, commonly in the sequence -Tyr-Xaa-Val-Gly-|-Gly, in the processing of the potyviral polyprotein.. Its function is as follows. Required for aphid transmission and also has proteolytic activity. Only cleaves a Gly-Gly dipeptide at its own C-terminus. Interacts with virions and aphid stylets. Acts as a suppressor of RNA-mediated gene silencing, also known as post-transcriptional gene silencing (PTGS), a mechanism of plant viral defense that limits the accumulation of viral RNAs. May have RNA-binding activity. In terms of biological role, allows efficient cell to cell propagation, by bypassing the host cell wall barrier. Transports viral genome to neighboring plant cells directly through plasmosdesmata, without any budding. The sequence is that of P3N-PIPO polyprotein from Lettuce mosaic virus (strain 0 / isolate French) (LMV).